Consider the following 447-residue polypeptide: Tubulin beta chain (447 aa).

GTP contacts are provided by glutamine 11, glutamate 69, serine 138, glycine 142, threonine 143, glycine 144, asparagine 204, and asparagine 226. Glutamate 69 provides a ligand contact to Mg(2+). The interval 424 to 447 (QYQEARSTDSDEYDNEEYYNQQEE) is disordered. A compositionally biased stretch (acidic residues) spans 433–447 (SDEYDNEEYYNQQEE).

It belongs to the tubulin family. In terms of assembly, dimer of alpha and beta chains. A typical microtubule is a hollow water-filled tube with an outer diameter of 25 nm and an inner diameter of 15 nM. Alpha-beta heterodimers associate head-to-tail to form protofilaments running lengthwise along the microtubule wall with the beta-tubulin subunit facing the microtubule plus end conferring a structural polarity. Microtubules usually have 13 protofilaments but different protofilament numbers can be found in some organisms and specialized cells. Mg(2+) serves as cofactor. In terms of tissue distribution, lens specific.

Its subcellular location is the cytoplasm. It is found in the cytoskeleton. Tubulin is the major constituent of microtubules, a cylinder consisting of laterally associated linear protofilaments composed of alpha- and beta-tubulin heterodimers. Microtubules grow by the addition of GTP-tubulin dimers to the microtubule end, where a stabilizing cap forms. Below the cap, tubulin dimers are in GDP-bound state, owing to GTPase activity of alpha-tubulin. The sequence is that of Tubulin beta chain from Enteroctopus dofleini (North Pacific giant octopus).